The following is an 89-amino-acid chain: MEIPKLLYIAVIAIGLSGSLTCATPLANPWADPEAEANPKAKATAEATAEAIAEALAEPEPALPALPLLAFLFSLPAVQHWIEKNWING.

The first 23 residues, 1–23, serve as a signal peptide directing secretion; the sequence is MEIPKLLYIAVIAIGLSGSLTCA. Residues 24 to 61 constitute a propeptide that is removed on maturation; that stretch reads TPLANPWADPEAEANPKAKATAEATAEAIAEALAEPEP. Asn88 bears the Asparagine amide mark.

Belongs to the formicidae venom clade 1 family. In terms of tissue distribution, expressed by the venom gland.

The protein localises to the secreted. Vertebrate-selective toxin that causes pain by targeting voltage-gated sodium channels. The chain is Myrmicitoxin(1)-Pr2c from Pogonomyrmex rugosus (Desert harvester ant).